The following is a 46-amino-acid chain: Diuretic hormone (46 aa).

I46 carries the isoleucine amide modification.

Belongs to the sauvagine/corticotropin-releasing factor/urotensin I family.

Its subcellular location is the secreted. Its function is as follows. Regulation of fluid secretion. Stimulates primary urine secretion by Malpighian tubules and causes a dose-dependent stimulation of cAMP levels in the tubules. The protein is Diuretic hormone of Locusta migratoria (Migratory locust).